The sequence spans 213 residues: Kynurenine formamidase (213 aa).

Tryptophan 18 is a binding site for substrate. Histidine 48, histidine 52, and aspartate 54 together coordinate Zn(2+). Histidine 58 serves as the catalytic Proton donor/acceptor. 2 residues coordinate Zn(2+): histidine 160 and glutamate 172.

The protein belongs to the Cyclase 1 superfamily. KynB family. Homodimer. Requires Zn(2+) as cofactor.

It carries out the reaction N-formyl-L-kynurenine + H2O = L-kynurenine + formate + H(+). It participates in amino-acid degradation; L-tryptophan degradation via kynurenine pathway; L-kynurenine from L-tryptophan: step 2/2. Catalyzes the hydrolysis of N-formyl-L-kynurenine to L-kynurenine, the second step in the kynurenine pathway of tryptophan degradation. The chain is Kynurenine formamidase from Burkholderia ambifaria (strain MC40-6).